The sequence spans 74 residues: Cecropin-P2 (74 aa).

A signal peptide spans 1–13; that stretch reads MIFIYLLVQTAES. Positions 45-74 are cleaved as a propeptide — removed in mature form; the sequence is RRRFVVQQDTISPRLEVDERFLPNSVQEQI.

This sequence belongs to the cecropin family. As to expression, expressed in the body wall, intestine, uterus and ovary.

It localises to the secreted. Functionally, has antibacterial activity against several Gram-positive and Gram-negative bacteria. Is weakly active against yeasts. Acts by a nonpore mechanism. The polypeptide is Cecropin-P2 (ASCEC-2) (Ascaris suum (Pig roundworm)).